The chain runs to 188 residues: Accessory gene regulator protein B (188 aa).

4 consecutive transmembrane segments (helical) span residues 49–69, 82–102, 104–124, and 163–183; these read VALLFHTFLYTLITHLTYFFV, LLCHIQNLVLFVALPWSIVHF, VSWTFMIFVAFIAFIIIICYA, and YMQLIALGMCIEAITLLPIFF.

The protein belongs to the AgrB family.

The protein resides in the cell membrane. Its function is as follows. Essential for the production of a quorum sensing system signal molecule, the autoinducing peptide (AIP). This quorum sensing system is responsible for the regulation of the expression of virulence factor genes. Involved in the proteolytic processing of AgrD, the precursor of AIP. The protein is Accessory gene regulator protein B of Staphylococcus lugdunensis.